Here is a 618-residue protein sequence, read N- to C-terminus: MTKKLPSELKQTRKSIQTACEFCHTKHIQCDVGRPCQNCLKRNIGKFCRDKKRKSRKRIEKHGTQPYLNLGKRLVIHDVPSKTVSPSSVHLQRDFLSSDQEKPGKTPAHNTNIQYTYNINDNFQSAGSIPRITNFNTNNRQTVLENTSNNISASQAVHLMNDPIIPTVRKSTLNLKSHFLEQHKAMQQPLATNCLVATSNVPVHSGMDDSNKSDDDVDDETNIHFDSMWCNDEYMKLKDIVDISTPFLPNNSQIFSLQESEYPNPSASTRGNSSLHLTNLLNSTKSVNDQKDSSIGHSTSTFNTYDEVVSRPFISLDMLHLNRGANANTHPSHNAKLESECDSSSHSDADLEKHDTDFISPSKFRELVKTPQDLYDNKCLIKPHNYKLAYTKLLTTLRKKFLEGAEIDKSASVKDEHSTQKHNLRYDLEVIIRSILERYAPIFISLTSNMIEEDLLLQEVTLQRALLDLENMAKLVSCTPMCIWRRSGEICFVSNEFYSLTGFNKNLLLDRTSFIFEYLDHKSVSNYFQIFNELLAFGYNDINKRKKLLMLNACSSTSSKITEGFSFTTDGKAIFTKCNLLLSNGLYLKCACCWTVKRDSFNIPILVMGQFLPIFEMD.

The segment at residues 20–48 is a DNA-binding region (zn(2)-C6 fungal-type); sequence CEFCHTKHIQCDVGRPCQNCLKRNIGKFC. The interval 325-352 is disordered; the sequence is ANANTHPSHNAKLESECDSSSHSDADLE. The segment covering 335–352 has biased composition (basic and acidic residues); the sequence is AKLESECDSSSHSDADLE. Positions 466-538 constitute a PAS domain; that stretch reads LLDLENMAKL…QIFNELLAFG (73 aa).

This sequence belongs to the ERT1/acuK family.

The protein resides in the nucleus. Transcription factor which regulates nonfermentable carbon utilization. Binds specifically to 5'-CGGN(8)CGG-3' and 5'-CGGN(9)CGG-3' sequences in the promoter region. The protein is Glucose starvation modulator protein 1 (GSM1) of Saccharomyces cerevisiae (strain ATCC 204508 / S288c) (Baker's yeast).